A 438-amino-acid chain; its full sequence is Serine hydroxymethyltransferase (438 aa).

Residues L133 and 137–139 (GHL) each bind (6S)-5,6,7,8-tetrahydrofolate. Residue K242 is modified to N6-(pyridoxal phosphate)lysine.

This sequence belongs to the SHMT family. As to quaternary structure, homodimer. Requires pyridoxal 5'-phosphate as cofactor.

It is found in the cytoplasm. The catalysed reaction is (6R)-5,10-methylene-5,6,7,8-tetrahydrofolate + glycine + H2O = (6S)-5,6,7,8-tetrahydrofolate + L-serine. The protein operates within one-carbon metabolism; tetrahydrofolate interconversion. It functions in the pathway amino-acid biosynthesis; glycine biosynthesis; glycine from L-serine: step 1/1. Catalyzes the reversible interconversion of serine and glycine with tetrahydrofolate (THF) serving as the one-carbon carrier. This reaction serves as the major source of one-carbon groups required for the biosynthesis of purines, thymidylate, methionine, and other important biomolecules. Also exhibits THF-independent aldolase activity toward beta-hydroxyamino acids, producing glycine and aldehydes, via a retro-aldol mechanism. The sequence is that of Serine hydroxymethyltransferase from Brucella melitensis biotype 2 (strain ATCC 23457).